We begin with the raw amino-acid sequence, 85 residues long: Alpha-mammal toxin AaH2 (85 aa).

A signal peptide spans 1–19 (MNYLVMISLALLFVTGVES). Positions 21–83 (KDGYIVDDVN…VRTKGPGRCH (63 aa)) constitute an LCN-type CS-alpha/beta domain. 4 cysteine pairs are disulfide-bonded: Cys31-Cys82, Cys35-Cys55, Cys41-Cys65, and Cys45-Cys67. Position 83 is a histidine amide (His83).

This sequence belongs to the long (4 C-C) scorpion toxin superfamily. Sodium channel inhibitor family. Alpha subfamily. In terms of processing, the amidation of His-83 is not necessary for toxicity. In terms of tissue distribution, expressed by the venom gland.

It localises to the secreted. Its function is as follows. Alpha toxin that binds voltage-independently at site-3 of sodium channels (Nav), inhibits the inactivation of the activated channels, and weakly inhibits activation, thereby blocking neuronal transmission. Inserts into voltage-sensing domain IV to stabilize a deactivated state, thereby preventing fast-inactivation. Principally slows the inactivation process of TTX-sensitive sodium channels. It is active on mammalian brain Nav1.2/SCN2A (EC(50)human=0.72 nM, EC(50)rat=2.6 nM), on rat skeletal muscle Nav1.4/SCN4A (EC(50)=2.2 nM), and on human neuronal Nav1.7/SCN9A (EC(50)=6.8-51.7 nM). In vivo, intraplantar injection into mice induces spontaneous pain responses. This is Alpha-mammal toxin AaH2 from Androctonus australis (Sahara scorpion).